A 199-amino-acid chain; its full sequence is NAD(P)H dehydrogenase (quinone) 1 (199 aa).

The 187-residue stretch at 4–190 (VLVLYYSAYG…EAARFQGAHV (187 aa)) folds into the Flavodoxin-like domain. Residues 10–15 (SAYGHI) and 78–80 (TRY) each bind FMN. Residue tyrosine 12 participates in NAD(+) binding. Tryptophan 98 is a binding site for substrate. FMN-binding positions include 113 to 119 (SSATQHG) and histidine 134.

The protein belongs to the WrbA family. The cofactor is FMN.

The catalysed reaction is a quinone + NADH + H(+) = a quinol + NAD(+). The enzyme catalyses a quinone + NADPH + H(+) = a quinol + NADP(+). The polypeptide is NAD(P)H dehydrogenase (quinone) 1 (Rhizobium meliloti (strain 1021) (Ensifer meliloti)).